The primary structure comprises 309 residues: Type II methyltransferase M.HgiDI (309 aa).

Positions 1-297 (MKTIDLFAGC…TSLQAYLNQP (297 aa)) constitute an SAM-dependent MTase C5-type domain. The active site involves cysteine 75.

Belongs to the class I-like SAM-binding methyltransferase superfamily. C5-methyltransferase family.

It carries out the reaction a 2'-deoxycytidine in DNA + S-adenosyl-L-methionine = a 5-methyl-2'-deoxycytidine in DNA + S-adenosyl-L-homocysteine + H(+). In terms of biological role, a methylase that recognizes the double-stranded sequence 5'-GRCGYC-3', methylates C-? on both strands, and protects the DNA from cleavage by the HgiDI endonuclease. The polypeptide is Type II methyltransferase M.HgiDI (Herpetosiphon aurantiacus (Herpetosiphon giganteus)).